The chain runs to 544 residues: Thermosome subunit (544 aa).

Belongs to the TCP-1 chaperonin family. Forms an oligomeric complex of eight-membered rings.

In terms of biological role, molecular chaperone; binds unfolded polypeptides in vitro, and has a weak ATPase activity. The protein is Thermosome subunit (ths) of Methanothermococcus thermolithotrophicus (Methanococcus thermolithotrophicus).